Reading from the N-terminus, the 284-residue chain is Syntaxin-like protein psy1 (284 aa).

Positions 23 to 57 (EEIDHIRDAIRQIEDNVGRIEMLHQQSLQEIDEAN) form a coiled coil. Residues 181 to 243 (LREVQERHAD…GEGTQHMDRA (63 aa)) form the t-SNARE coiled-coil homology domain. Residues 260–280 (ICVVIICVIVAVLCGVLIPVL) traverse the membrane as a helical; Anchor for type IV membrane protein segment.

Belongs to the syntaxin family.

The protein resides in the cell membrane. The protein localises to the prospore membrane. This is Syntaxin-like protein psy1 (psy1) from Schizosaccharomyces pombe (strain 972 / ATCC 24843) (Fission yeast).